Consider the following 763-residue polypeptide: 5-methyltetrahydropteroyltriglutamate--homocysteine methyltransferase (763 aa).

5-methyltetrahydropteroyltri-L-glutamate is bound by residues 16 to 19 (RELK) and Lys117. L-homocysteine contacts are provided by residues 440–442 (IGS) and Glu493. Residues 440 to 442 (IGS) and Glu493 contribute to the L-methionine site. 5-methyltetrahydropteroyltri-L-glutamate contacts are provided by residues 524-525 (RC) and Trp570. Residue Asp608 participates in L-homocysteine binding. An L-methionine-binding site is contributed by Asp608. Glu614 provides a ligand contact to 5-methyltetrahydropteroyltri-L-glutamate. Positions 650, 652, and 674 each coordinate Zn(2+). The Proton donor role is filled by His703. Cys735 serves as a coordination point for Zn(2+).

This sequence belongs to the vitamin-B12 independent methionine synthase family. Zn(2+) serves as cofactor.

The catalysed reaction is 5-methyltetrahydropteroyltri-L-glutamate + L-homocysteine = tetrahydropteroyltri-L-glutamate + L-methionine. It functions in the pathway amino-acid biosynthesis; L-methionine biosynthesis via de novo pathway; L-methionine from L-homocysteine (MetE route): step 1/1. Its function is as follows. Catalyzes the transfer of a methyl group from 5-methyltetrahydrofolate to homocysteine resulting in methionine formation. In Alcanivorax borkumensis (strain ATCC 700651 / DSM 11573 / NCIMB 13689 / SK2), this protein is 5-methyltetrahydropteroyltriglutamate--homocysteine methyltransferase.